Consider the following 363-residue polypeptide: Alanine racemase (363 aa).

Lysine 35 (proton acceptor; specific for D-alanine) is an active-site residue. Lysine 35 is subject to N6-(pyridoxal phosphate)lysine. Arginine 134 lines the substrate pocket. Residue tyrosine 259 is the Proton acceptor; specific for L-alanine of the active site. Residue methionine 307 coordinates substrate.

This sequence belongs to the alanine racemase family. The cofactor is pyridoxal 5'-phosphate.

It catalyses the reaction L-alanine = D-alanine. It participates in amino-acid biosynthesis; D-alanine biosynthesis; D-alanine from L-alanine: step 1/1. Functionally, catalyzes the interconversion of L-alanine and D-alanine. May also act on other amino acids. The polypeptide is Alanine racemase (alr) (Shewanella denitrificans (strain OS217 / ATCC BAA-1090 / DSM 15013)).